Here is a 172-residue protein sequence, read N- to C-terminus: Secretory-abundant heat soluble protein 64681 (172 aa).

An N-terminal signal peptide occupies residues 1 to 19; the sequence is MSRTIVALILLGLAALAAA. The SAHS-c1 stretch occupies residues 30 to 59; it reads EWAGKAWLGKWVSTDRSENWDAFVEALGLP. Residues 74-102 are SAHS-c2; the sequence is WKEGDHYHHQIIIADKSYKQDIQFKLGEE. 2 N-linked (GlcNAc...) asparagine glycosylation sites follow: asparagine 108 and asparagine 133. An SAHS-c3 region spans residues 115–164; the sequence is KYTEVGDNLQNEVKIPSKNKTISDSYVVKGDELEKTYKINDVVAKRWYKK.

This sequence belongs to the Secretory-abundant heat soluble protein (SAHS) family.

It localises to the secreted. Its function is as follows. Secreted heat soluble protein acting as a molecular shield in water-deficient condition. Tardigrade-specific intrinsically disordered proteins (TDPs) are essential for desiccation tolerance by forming non-crystalline amorphous solids upon desiccation, and this vitrified state mirrors their protective capabilities. The polypeptide is Secretory-abundant heat soluble protein 64681 (Hypsibius exemplaris (Freshwater tardigrade)).